Here is a 590-residue protein sequence, read N- to C-terminus: Multidrug and toxin extrusion protein 1 (590 aa).

Over Met1–Leu59 the chain is Cytoplasmic. Residues Ala60 to Phe80 form a helical membrane-spanning segment. The Extracellular segment spans residues Cys81–Glu88. A helical membrane pass occupies residues Leu89 to Gly109. The Cytoplasmic segment spans residues Leu110 to Gly137. Residues Ile138–Ile158 form a helical membrane-spanning segment. The Extracellular segment spans residues Leu159 to Asn167. A helical transmembrane segment spans residues Val168–Met188. Topologically, residues Tyr189–Gln199 are cytoplasmic. The helical transmembrane segment at Gly200–Val222 threads the bilayer. Residues Phe223 to Val231 are Extracellular-facing. A helical membrane pass occupies residues Ala232–Arg254. Over Trp255–Trp274 the chain is Cytoplasmic. Residues Gly275–Thr294 form a helical membrane-spanning segment. Residues Tyr295–Gln313 are Extracellular-facing. The helical transmembrane segment at Ser314–Ala334 threads the bilayer. Topologically, residues Ser335 to Lys351 are cytoplasmic. The helical transmembrane segment at Leu352–Ile372 threads the bilayer. Topologically, residues Gly373–Gln395 are extracellular. A helical transmembrane segment spans residues Val396–Ile416. Residues Val417–Asn430 lie on the Cytoplasmic side of the membrane. Residues Ile431–Met451 form a helical membrane-spanning segment. Residue Gly452 is a topological domain, extracellular. A helical membrane pass occupies residues Ile453–Ile473. The Cytoplasmic segment spans residues Leu474–Gly565. The chain crosses the membrane as a helical span at residues Leu566–Val586. Over Arg587 to Arg590 the chain is Extracellular.

Belongs to the multi antimicrobial extrusion (MATE) (TC 2.A.66.1) family.

Its subcellular location is the cell membrane. In terms of biological role, solute transporter for tetraethylammonium (TEA), cimetidine, metformin, guanidine, N-methylnicotinamide (NMN) and also the zwitterionic cephalosporin cephalexin. Responsible for the secretion of cationic drugs across the brush border membranes. The sequence is that of Multidrug and toxin extrusion protein 1 (slc47a1) from Danio rerio (Zebrafish).